A 338-amino-acid chain; its full sequence is Purple acid phosphatase 17 (338 aa).

The signal sequence occupies residues 1–31 (MNSGRRSLMSATASLSLLLCIFTTFVVVSNG). Residue Asp53 coordinates Fe cation. N-linked (GlcNAc...) asparagine glycosylation occurs at Asn61. Fe cation-binding residues include Asp86 and Tyr89. Asp86 serves as a coordination point for Zn(2+). Zn(2+)-binding residues include Asn124 and His218. Residue His227 is the Proton donor of the active site. Position 253 (His253) interacts with Zn(2+). 253–255 (HDH) contributes to the substrate binding site. His255 serves as a coordination point for Fe cation.

It belongs to the metallophosphoesterase superfamily. Purple acid phosphatase family. In terms of assembly, homodimer. It depends on Fe cation as a cofactor. Zn(2+) serves as cofactor. In terms of tissue distribution, expressed in roots, stems, leaves, flowers and siliques.

Its subcellular location is the secreted. The catalysed reaction is a phosphate monoester + H2O = an alcohol + phosphate. The enzyme catalyses 2 a phenolic donor + H2O2 = 2 a phenolic radical donor + 2 H2O. Inhibited by phosphate and molybdate. Its function is as follows. Metallo-phosphoesterase involved in phosphate metabolism. Has a peroxidase activity. This Arabidopsis thaliana (Mouse-ear cress) protein is Purple acid phosphatase 17 (PAP17).